Here is a 279-residue protein sequence, read N- to C-terminus: Bifunctional protein FolD (279 aa).

Residues 164 to 166 (GRS), serine 189, and isoleucine 230 each bind NADP(+).

The protein belongs to the tetrahydrofolate dehydrogenase/cyclohydrolase family. Homodimer.

It catalyses the reaction (6R)-5,10-methylene-5,6,7,8-tetrahydrofolate + NADP(+) = (6R)-5,10-methenyltetrahydrofolate + NADPH. The catalysed reaction is (6R)-5,10-methenyltetrahydrofolate + H2O = (6R)-10-formyltetrahydrofolate + H(+). It participates in one-carbon metabolism; tetrahydrofolate interconversion. Functionally, catalyzes the oxidation of 5,10-methylenetetrahydrofolate to 5,10-methenyltetrahydrofolate and then the hydrolysis of 5,10-methenyltetrahydrofolate to 10-formyltetrahydrofolate. The protein is Bifunctional protein FolD of Agathobacter rectalis (strain ATCC 33656 / DSM 3377 / JCM 17463 / KCTC 5835 / VPI 0990) (Eubacterium rectale).